The chain runs to 290 residues: Probable 2-(5''-triphosphoribosyl)-3'-dephosphocoenzyme-A synthase (290 aa).

This sequence belongs to the CitG/MdcB family.

It carries out the reaction 3'-dephospho-CoA + ATP = 2'-(5''-triphospho-alpha-D-ribosyl)-3'-dephospho-CoA + adenine. Its function is as follows. Involved in the formation of 2-(5''-phosphoribosyl)-3'-dephosphocoenzyme-A, the prosthetic group of the acyl-carrier protein of the malonate decarboxylase. This Pseudomonas fluorescens (strain Pf0-1) protein is Probable 2-(5''-triphosphoribosyl)-3'-dephosphocoenzyme-A synthase.